The primary structure comprises 504 residues: Putative arrestin-related trafficking adapter SPBC839.02 (504 aa).

Residues Gln-481–Asn-504 are disordered.

It belongs to the ALY1 family.

May regulate endocytosis in response to extracellular stimuli. In Schizosaccharomyces pombe (strain 972 / ATCC 24843) (Fission yeast), this protein is Putative arrestin-related trafficking adapter SPBC839.02.